Consider the following 155-residue polypeptide: Gas vesicle protein K (155 aa).

This sequence belongs to the gas vesicle GvpK family.

The protein resides in the gas vesicle. Its function is as follows. Might be involved in nucleating gas vesicle formation. Gas vesicles (GV) are hollow, gas filled proteinaceous nanostructures. During planktonic growth they allow positioning of the organism at a favorable depth for light or nutrient acquisition. Cluster expression in E.coli (gvpA1-gvpA2-gvpC-gvpN-gvpJ-gvpK-gvpF-gvpG-gvpV-gvpW) allows cells to float and produces irregularly shaped gas vesicles. The protein is Gas vesicle protein K of Nostoc sp. (strain PCC 7120 / SAG 25.82 / UTEX 2576).